A 644-amino-acid polypeptide reads, in one-letter code: Ribonuclease R (644 aa).

Positions 211 to 529 (RINYSHIPFI…LHRLLKELLF (319 aa)) constitute an RNB domain. In terms of domain architecture, S1 motif spans 573-644 (LEFLEKEFLG…ITERIKEHVS (72 aa)).

It belongs to the RNR ribonuclease family. RNase R subfamily.

It localises to the cytoplasm. It carries out the reaction Exonucleolytic cleavage in the 3'- to 5'-direction to yield nucleoside 5'-phosphates.. 3'-5' exoribonuclease that releases 5'-nucleoside monophosphates and is involved in maturation of structured RNAs. The chain is Ribonuclease R from Helicobacter pylori (strain J99 / ATCC 700824) (Campylobacter pylori J99).